Reading from the N-terminus, the 309-residue chain is MSSQAASDNPFDPAMWERVPGFDDLTDITYHRHVLDGARQPTVRVAFDRPEVRNAFRPHTVDELYRVLDHARMSSDVGVILLTGNGPSPKDGGWAFCSGGDQRIRGRTGYQYASGETAETVDPARAGRLHILEVQRLIRFMPKVVICLVNGWAAGGGHSLHVTCDLTLASREHARFKQTDADVGSFDGGFGSAYLARQTGQKFAREIFFLGRAYDAQTMHQMGAVNEVVDHADLEKAGLQYAAEINGKSPQAIRMLKFAFNLIDDGLVGQQVFAGEATRLAYMTDEAVEGRDAFLEKRDPDWSRFPRYF.

Residues Arg-53, 98 to 102 (SGGDQ), Tyr-110, 152 to 156 (WAAGG), Thr-179, Ser-185, Tyr-282, and Lys-297 contribute to the substrate site.

It belongs to the enoyl-CoA hydratase/isomerase family. MenB subfamily.

It carries out the reaction 2-succinylbenzoyl-CoA + H(+) = 1,4-dihydroxy-2-naphthoyl-CoA + H2O. The protein operates within quinol/quinone metabolism; 1,4-dihydroxy-2-naphthoate biosynthesis; 1,4-dihydroxy-2-naphthoate from chorismate: step 6/7. Its pathway is quinol/quinone metabolism; menaquinone biosynthesis. In terms of biological role, converts o-succinylbenzoyl-CoA (OSB-CoA) to 1,4-dihydroxy-2-naphthoyl-CoA (DHNA-CoA). This chain is 1,4-dihydroxy-2-naphthoyl-CoA synthase, found in Mycolicibacterium smegmatis (strain ATCC 700084 / mc(2)155) (Mycobacterium smegmatis).